The primary structure comprises 555 residues: Transmembrane protein 87A (555 aa).

The N-terminal stretch at 1-21 (MAAAAWLQVLPVILLLLGAHP) is a signal peptide. Residues 22-225 (SPLSFFSAGP…YEYLTLEDYP (204 aa)) are Lumenal-facing. 2 disulfide bridges follow: Cys74-Cys128 and Cys89-Cys431. N-linked (GlcNAc...) asparagine glycans are attached at residues Asn79, Asn127, Asn157, and Asn160. The chain crosses the membrane as a helical span at residues 226 to 246 (LMIFFMVMCIVYVLFGVLWLA). Over 247–257 (WSACYWRDLLR) the chain is Cytoplasmic. Residues 258–278 (IQFWIGAVIFLGMLEKAVFYA) form a helical membrane-spanning segment. Topologically, residues 279–305 (EFQNIRYKGESVQGALILAELLSAVKR) are lumenal. The helical transmembrane segment at 306–322 (SLARTLVIIVSLGYGIV) threads the bilayer. Over 323-325 (KPR) the chain is Cytoplasmic. A helical transmembrane segment spans residues 326–346 (LGVTLHKVVVAGALYLLFSGM). At 347–361 (EGVLRVTGAQTDLAS) the chain is on the lumenal side. Residues 362–382 (LAFIPLAFLDTALCWWIFISL) form a helical membrane-spanning segment. Over 383–403 (TQTMKLLKLRRNIVKLSLYRH) the chain is Cytoplasmic. The chain crosses the membrane as a helical span at residues 404–424 (FTNTLILAVAASIVFIIWTTM). Topologically, residues 425–437 (KFRIVTCQSDWRE) are lumenal. Residues 438 to 458 (LWVDDAIWRLLFSMILFVIMV) form a helical membrane-spanning segment. Over 459–555 (LWRPSANNQR…ITHFERSKME (97 aa)) the chain is Cytoplasmic. The segment at 473-516 (PLSEEEEEDEQKEPMLKESFEGMKMRSTKQEPNGNSKVNKAQED) is disordered. The segment covering 484–496 (KEPMLKESFEGMK) has biased composition (basic and acidic residues). Residues 502 to 511 (QEPNGNSKVN) show a composition bias toward polar residues. Residue Ser540 is modified to Phosphoserine.

Belongs to the LU7TM family. TMEM87 subfamily. In terms of assembly, may interact with STOML3; STOML3 potentiates the mechanosensitive ion channel activity associated with TMEM87A.

Its subcellular location is the cell membrane. It is found in the golgi apparatus membrane. It localises to the cell projection. The protein localises to the ruffle. Potential monoatomic ion channel gated by mechanical force, implicated in normal touch sensitivity through the generation of mechanically activated currents. However, a direct channel activity is debated and an alternative could be that it functions as a chaperone for an unidentified mechanosensitive ion channel. Could also be involved in cell mechanosensitivity regulating cell adhesion and migration. May also be involved in retrograde transport from endosomes to the trans-Golgi network (TGN). This is Transmembrane protein 87A from Homo sapiens (Human).